The following is a 669-amino-acid chain: Acetyl-coenzyme A synthetase (669 aa).

Residues 211–214 (RGGK) and Thr-329 contribute to the CoA site. ATP is bound by residues 404-406 (GEP), 428-433 (DTYWQT), Asp-519, and Arg-534. Ser-542 contacts CoA. ATP is bound at residue Arg-545. Arg-602 contacts CoA.

It belongs to the ATP-dependent AMP-binding enzyme family.

The catalysed reaction is acetate + ATP + CoA = acetyl-CoA + AMP + diphosphate. The protein operates within ketone degradation; acetoin degradation. It functions in the pathway antibiotic biosynthesis; penicillin biosynthesis. The chain is Acetyl-coenzyme A synthetase (facA) from Penicillium chrysogenum (Penicillium notatum).